Reading from the N-terminus, the 209-residue chain is Orotate phosphoribosyltransferase (209 aa).

5-phospho-alpha-D-ribose 1-diphosphate contacts are provided by residues Arg96, Lys100, His102, and 122–130 (EDLISTGKS). Ser126 contacts orotate.

It belongs to the purine/pyrimidine phosphoribosyltransferase family. PyrE subfamily. As to quaternary structure, homodimer. It depends on Mg(2+) as a cofactor.

The enzyme catalyses orotidine 5'-phosphate + diphosphate = orotate + 5-phospho-alpha-D-ribose 1-diphosphate. It functions in the pathway pyrimidine metabolism; UMP biosynthesis via de novo pathway; UMP from orotate: step 1/2. Catalyzes the transfer of a ribosyl phosphate group from 5-phosphoribose 1-diphosphate to orotate, leading to the formation of orotidine monophosphate (OMP). The polypeptide is Orotate phosphoribosyltransferase (Coxiella burnetii (strain RSA 493 / Nine Mile phase I)).